The sequence spans 117 residues: Acylphosphatase (117 aa).

One can recognise an Acylphosphatase-like domain in the interval 21 to 107 (RWRFRIRGLV…TGADWFEIRP (87 aa)). Active-site residues include R36 and N54.

This sequence belongs to the acylphosphatase family.

The enzyme catalyses an acyl phosphate + H2O = a carboxylate + phosphate + H(+). The sequence is that of Acylphosphatase (acyP) from Synechococcus sp. (strain RCC307).